The primary structure comprises 502 residues: Ubiquilin (502 aa).

Positions 8–83 (IKVHVKSPSN…VHLVIRNQAR (76 aa)) constitute a Ubiquitin-like domain. Residues 84 to 115 (PTPAPAAATPTASSAPSSNPTPSSQPNPTNNP) are compositionally biased toward low complexity. The interval 84–136 (PTPAPAAATPTASSAPSSNPTPSSQPNPTNNPFAAMGGMGSPADILNNPDAMR) is disordered. 2 STI1 domains span residues 124–157 (SPAD…MRTI) and 161–200 (NPQF…FQEM). Positions 235-251 (SATNSLSGNPFASLRGD) are enriched in polar residues. Residues 235–294 (SATNSLSGNPFASLRGDQSSEPRVDRAGQENNEALPNPWASNANQATNNQSNNRSADFNS) form a disordered region. The span at 252-262 (QSSEPRVDRAG) shows a compositional bias: basic and acidic residues. Over residues 274 to 290 (ASNANQATNNQSNNRSA) the composition is skewed to low complexity. STI1 domains are found at residues 289–327 (SADF…INSI) and 351–387 (NPQI…SEAF). In terms of domain architecture, UBA spans 455–501 (PVNPEQTYASQLEQLQSMGFSDRARNVAALTATFGDLNAAVERLLNS).

In terms of tissue distribution, expressed in the pharynx, hypodermis, intestine and head neurons. Upon ER stress, expressed predominantly in pharyngeal muscle, hypodermis and intestine.

Its function is as follows. May play a role in the ER-associated protein degradation pathway (ERAD) possibly via its interaction with ER-localized proteins ubxn-4 and cdc-48.1 and/or cdc48.2, providing a link between the polyubiquitinated ERAD substrates and the proteasome. Also plays an important role in the regulation of other protein degradation mechanisms and pathways including ubiquitin-proteasome system (UPS) and autophagy. Mediates the proteasomal targeting of misfolded or accumulated proteins for degradation by binding (via UBA domain) to their polyubiquitin chains and by interacting (via ubiquitin-like domain) with the subunits of the proteasome. Collaborates with POST (F36D4.5) in the export of ubiquitinated proteins from the nucleus to the cytoplasm. Also acts as a regulator of DNA repair by inhibiting homologous recombination repair, thereby redirecting double-strand break repair toward non-homologous end joining (NHEJ). This chain is Ubiquilin, found in Caenorhabditis elegans.